The following is a 275-amino-acid chain: Large ribosomal subunit protein uL2 (275 aa).

Disordered regions lie at residues 28-54 (APHA…TRHI) and 223-275 (VAMN…RNKK).

Belongs to the universal ribosomal protein uL2 family. As to quaternary structure, part of the 50S ribosomal subunit. Forms a bridge to the 30S subunit in the 70S ribosome.

One of the primary rRNA binding proteins. Required for association of the 30S and 50S subunits to form the 70S ribosome, for tRNA binding and peptide bond formation. It has been suggested to have peptidyltransferase activity; this is somewhat controversial. Makes several contacts with the 16S rRNA in the 70S ribosome. The protein is Large ribosomal subunit protein uL2 of Saccharophagus degradans (strain 2-40 / ATCC 43961 / DSM 17024).